Here is an 89-residue protein sequence, read N- to C-terminus: Small ribosomal subunit protein uS17 (89 aa).

This sequence belongs to the universal ribosomal protein uS17 family. In terms of assembly, part of the 30S ribosomal subunit.

In terms of biological role, one of the primary rRNA binding proteins, it binds specifically to the 5'-end of 16S ribosomal RNA. This chain is Small ribosomal subunit protein uS17, found in Albidiferax ferrireducens (strain ATCC BAA-621 / DSM 15236 / T118) (Rhodoferax ferrireducens).